The chain runs to 546 residues: MDIPVELRDYSKRRESEEAVANEGNSDDDGNEYLSGLRLTYLFLALILCMLLAVIDLTITATAVPHITDEFHSLNDIGWYASVFFMTVASSQSSWGKIYRYFDLKNMFLLAMGIFELGNVICGAAPTSNALIVGRAITGIGAAGVIAGCFTVAAFAVRPSKRPAFTGGLAATYGVGSSIGPIIGGVLSDRVSWRWCFYINLPIGGFAAIVLFLFFKSPAHSRNEADHRASWREKMLQMDFPGFFCCIAAVTCLLLALLWGGTTKSWNSSDVIGTLVGFFLFTALFAVVEWKSGERAMVVPRIMKQRVVLFGTIGGFFAGGAQFVLVYYVPIYFQAILGTSAQDSGVRNLPYIIGSTITTIVAGTTISATGYFTPLIVGGGALWTVSAGLIYTWSPTTTTGQWIGYQALAGLAVGLCYQPPILAAQALAAPTDVAATSAILLFFQTMGGAFMVSAAQTAFSNGLIHKLVQYSPGTDVQAVIATGLQELRVRYTGAELEAIIQSYMDGLKISFAIIIALTGASTVAGIFMPWKSFKTIQAEKNVENSD.

Transmembrane regions (helical) follow at residues 39 to 59 (LTYL…DLTI), 77 to 96 (IGWY…SSWG), 107 to 127 (MFLL…AAPT), 137 to 157 (ITGI…AFAV), 167 to 187 (GGLA…GGVL), 195 to 215 (WCFY…FLFF), and 240 to 260 (FPGF…LLWG). N-linked (GlcNAc...) asparagine glycosylation is present at Asn267. Helical transmembrane passes span 270–290 (DVIG…VVEW), 307–327 (VVLF…VLVY), 349–369 (LPYI…ISAT), 370–390 (GYFT…AGLI), 402–422 (WIGY…PPIL), 433–453 (VAAT…FMVS), and 509–529 (ISFA…IFMP).

The protein belongs to the major facilitator superfamily.

The protein resides in the cell membrane. Its pathway is secondary metabolite biosynthesis. In terms of biological role, MFS-type transporter; part of the gene cluster that mediates the biosynthesis of dibenzodioxocinones such as pestalotiollide B, a novel class of inhibitors against cholesterol ester transfer protein (CEPT). essential for dibenzodioxocinones biosynthesis and may be involved in the secretion of the cluster products. In Pestalotiopsis microspora, this protein is MFS-type transporter GME11371.